Consider the following 1219-residue polypeptide: FK506-binding protein 15 (1219 aa).

N-acetylmethionine is present on M1. Phosphoserine occurs at positions 14 and 23. A disordered region spans residues 41 to 66 (YTAPKQPKKGQGTAATGNQATPKTAP). Residues 53 to 66 (TAATGNQATPKTAP) show a composition bias toward polar residues. The important for function in growth cone organization stretch occupies residues 72 to 169 (PTILVATAVH…AVEFNKQVCI (98 aa)). Residue K92 is modified to N6-acetyllysine. Positions 197–290 (GDSLEVAYTG…VFEVEVRRVK (94 aa)) constitute a PPIase FKBP-type domain. Residues 294–349 (DSGSDGHSVSSRDSAAPSPIPGADNLSADPVVSPPTSIPFKSGEPALRTKSNSLSE) are disordered. Phosphoserine is present on residues S307, S311, S326, S344, S346, and S356. Residues 381–433 (PQLDSNDSEIEDVNTLQGGGQPVVTPSVQPSLHPAHPALPQMTSQAPQPSVTG) are disordered. Positions 421–433 (QMTSQAPQPSVTG) are enriched in polar residues. Coiled coils occupy residues 522–789 (AVSK…TDQA), 818–878 (DEHL…GVEA), and 925–951 (TLQL…AEER). Phosphoserine is present on S619. The tract at residues 739 to 761 (LEKNLSERKKKSAQERSQAEEEI) is disordered. A disordered region spans residues 931-1219 (QQEQEKEESS…DDDDDIDWLG (289 aa)). Phosphoserine is present on residues S939, S940, S941, and S956. The segment covering 957–971 (QEQSASASSGQPQAP) has biased composition (low complexity). A phosphoserine mark is found at S979, S1024, S1056, S1061, S1065, and S1097. The segment covering 1090 to 1100 (QESSTRLSLTS) has biased composition (polar residues). Residue T1099 is modified to Phosphothreonine. Position 1114 is a phosphoserine (S1114). Residues 1123–1139 (LKKDDVTSSTGPHKELS) are compositionally biased toward basic and acidic residues. Phosphoserine occurs at positions 1158, 1161, 1162, 1164, and 1195. A Phosphothreonine modification is found at T1203. Acidic residues predominate over residues 1207–1219 (GDDDDDDDIDWLG).

The protein belongs to the FKBP-type PPIase family. Interacts with WIP and actin. Interacts with TBC1D23.

Its subcellular location is the cytoplasm. It localises to the cell projection. It is found in the axon. The protein resides in the early endosome. In terms of biological role, may be involved in the cytoskeletal organization of neuronal growth cones. Seems to be inactive as a PPIase. Involved in the transport of early endosomes at the level of transition between microfilament-based and microtubule-based movement. This is FK506-binding protein 15 (FKBP15) from Homo sapiens (Human).